A 137-amino-acid polypeptide reads, in one-letter code: uncharacterized protein (137 aa).

A helical membrane pass occupies residues 111 to 131 (LAVGVLVGSNLVVGSLVFALL).

Its subcellular location is the membrane. This is an uncharacterized protein from Saccharomyces cerevisiae (strain ATCC 204508 / S288c) (Baker's yeast).